Consider the following 269-residue polypeptide: Aquaporin-1 (269 aa).

At Met-1–Trp-11 the chain is on the cytoplasmic side. The helical transmembrane segment at Arg-12–Ile-29 threads the bilayer. Over Gly-30–Val-46 the chain is Extracellular. An N-linked (GlcNAc...) asparagine glycan is attached at Asn-42. The chain crosses the membrane as a helical span at residues Gln-47–Gln-65. The Cytoplasmic portion of the chain corresponds to Ser-66–Gly-68. The stretch at His-69–Gly-82 is an intramembrane region. The short motif at Asn-76–Ala-78 is the NPA 1 element. Residues Leu-83–Ser-90 are Cytoplasmic-facing. The helical transmembrane segment at Ile-91–Thr-109 threads the bilayer. Topologically, residues Ala-110–Val-133 are extracellular. The chain crosses the membrane as a helical span at residues Asn-134–Val-153. Residues Leu-154 to Asp-163 are Cytoplasmic-facing. The chain crosses the membrane as a helical span at residues Leu-164 to Leu-181. The Extracellular segment spans residues Leu-182–Tyr-186. An intramembrane segment occupies Thr-187–Ser-199. The short motif at Asn-192–Ala-194 is the NPA 2 element. Residues Ala-200 to Phe-206 are Extracellular-facing. N-linked (GlcNAc...) asparagine glycosylation occurs at Asn-205. A helical transmembrane segment spans residues Ser-207–Val-224. Topologically, residues Leu-225–Lys-269 are cytoplasmic. Phosphoserine is present on Ser-247. Tyr-253 carries the phosphotyrosine modification. At Ser-262 the chain carries Phosphoserine.

Belongs to the MIP/aquaporin (TC 1.A.8) family. As to quaternary structure, homotetramer; each monomer provides an independent water pore. Component of the ankyrin-1 complex in the erythrocyte, composed of ANK1, RHCE, RHAG, SLC4A1, EPB42, GYPA, GYPB and AQP1. Interacts with EPHB2; involved in endolymph production in the inner ear. Identified in a complex with STOM. Interacts (via the N-terminal) with ANK1 (via ANK 1-5 repeats). Interacts (via the C-terminal) with EPB42.

It is found in the cell membrane. The catalysed reaction is H2O(in) = H2O(out). The enzyme catalyses nitric oxide(out) = nitric oxide(in). It catalyses the reaction CO2(out) = CO2(in). It carries out the reaction glycerol(in) = glycerol(out). The catalysed reaction is H2O2(out) = H2O2(in). The enzyme catalyses K(+)(in) = K(+)(out). It catalyses the reaction Na(+)(in) = Na(+)(out). In terms of biological role, forms a water channel that facilitates the transport of water across cell membranes, playing a crucial role in water homeostasis in various tissues. Could also be permeable to small solutes including hydrogen peroxide, glycerol and gases such as amonnia (NH3), nitric oxide (NO) and carbon dioxide (CO2). Recruited to the ankyrin-1 complex, a multiprotein complex of the erythrocyte membrane, it could be part of a CO2 metabolon, linking facilitated diffusion of CO2 across the membrane, anion exchange of Cl(-)/HCO3(-) and interconversion of dissolved CO2 and carbonic acid in the cytosol. In vitro, it shows non-selective gated cation channel activity and may be permeable to cations like K(+) and Na(+) in vivo. This chain is Aquaporin-1, found in Pongo abelii (Sumatran orangutan).